Consider the following 84-residue polypeptide: Small ribosomal subunit protein uS17 (84 aa).

The protein belongs to the universal ribosomal protein uS17 family. In terms of assembly, part of the 30S ribosomal subunit.

In terms of biological role, one of the primary rRNA binding proteins, it binds specifically to the 5'-end of 16S ribosomal RNA. The polypeptide is Small ribosomal subunit protein uS17 (Buchnera aphidicola subsp. Cinara cedri (strain Cc)).